Reading from the N-terminus, the 458-residue chain is Tyrosine phenol-lyase (458 aa).

An N6-(pyridoxal phosphate)lysine modification is found at K258.

This sequence belongs to the beta-eliminating lyase family. Homotetramer. Requires pyridoxal 5'-phosphate as cofactor.

The catalysed reaction is L-tyrosine + H2O = phenol + pyruvate + NH4(+). The chain is Tyrosine phenol-lyase (tpl) from Symbiobacterium thermophilum (strain DSM 24528 / JCM 14929 / IAM 14863 / T).